A 324-amino-acid chain; its full sequence is tRNA U34 carboxymethyltransferase (324 aa).

Carboxy-S-adenosyl-L-methionine-binding positions include Lys-91, Trp-105, Lys-110, Gly-130, 152-154, 181-182, Met-196, Tyr-200, and Arg-315; these read DPS and IE.

This sequence belongs to the class I-like SAM-binding methyltransferase superfamily. CmoB family. Homotetramer.

It carries out the reaction carboxy-S-adenosyl-L-methionine + 5-hydroxyuridine(34) in tRNA = 5-carboxymethoxyuridine(34) in tRNA + S-adenosyl-L-homocysteine + H(+). Catalyzes carboxymethyl transfer from carboxy-S-adenosyl-L-methionine (Cx-SAM) to 5-hydroxyuridine (ho5U) to form 5-carboxymethoxyuridine (cmo5U) at position 34 in tRNAs. This is tRNA U34 carboxymethyltransferase from Aliivibrio salmonicida (strain LFI1238) (Vibrio salmonicida (strain LFI1238)).